A 188-amino-acid polypeptide reads, in one-letter code: Elongation factor P (188 aa).

N6-(3,6-diaminohexanoyl)-5-hydroxylysine is present on lysine 34.

This sequence belongs to the elongation factor P family. May be beta-lysylated on the epsilon-amino group of Lys-34 by the combined action of EpmA and EpmB, and then hydroxylated on the C5 position of the same residue by EpmC (if this protein is present). Lysylation is critical for the stimulatory effect of EF-P on peptide-bond formation. The lysylation moiety may extend toward the peptidyltransferase center and stabilize the terminal 3-CCA end of the tRNA. Hydroxylation of the C5 position on Lys-34 may allow additional potential stabilizing hydrogen-bond interactions with the P-tRNA.

The protein resides in the cytoplasm. The protein operates within protein biosynthesis; polypeptide chain elongation. Its function is as follows. Involved in peptide bond synthesis. Alleviates ribosome stalling that occurs when 3 or more consecutive Pro residues or the sequence PPG is present in a protein, possibly by augmenting the peptidyl transferase activity of the ribosome. Modification of Lys-34 is required for alleviation. The sequence is that of Elongation factor P from Coxiella burnetii (strain CbuK_Q154) (Coxiella burnetii (strain Q154)).